The chain runs to 358 residues: Photosystem II protein D1 (358 aa).

Helical transmembrane passes span 28-45 (YVGW…AAAI), 117-132 (HFLI…QWEL), and 141-155 (WICV…AAFA). Residue His117 coordinates chlorophyll a. Residue Trp125 coordinates pheophytin a. Residues Asp169 and Glu188 each contribute to the [CaMn4O5] cluster site. The helical transmembrane segment at 196–217 (FHMIGVAGMFGGSLFSAMHGSL) threads the bilayer. His197 serves as a coordination point for chlorophyll a. A quinone-binding positions include His214 and 263–264 (SF). Residue His214 participates in Fe cation binding. His271 is a Fe cation binding site. Residues 273–287 (FLAAWPVICIWITSL) form a helical membrane-spanning segment. Residues His331, Glu332, Asp341, and Ala343 each contribute to the [CaMn4O5] cluster site. Positions 344 to 358 (AAESTPVALIAPAIG) are excised as a propeptide.

The protein belongs to the reaction center PufL/M/PsbA/D family. In terms of assembly, PSII is composed of 1 copy each of membrane proteins PsbA, PsbB, PsbC, PsbD, PsbE, PsbF, PsbH, PsbI, PsbJ, PsbK, PsbL, PsbM, PsbT, PsbX, PsbY, Psb30/Ycf12, peripheral proteins PsbO, CyanoQ (PsbQ), PsbU, PsbV and a large number of cofactors. It forms dimeric complexes. The D1/D2 heterodimer binds P680, chlorophylls that are the primary electron donor of PSII, and subsequent electron acceptors. It shares a non-heme iron and each subunit binds pheophytin, quinone, additional chlorophylls, carotenoids and lipids. D1 provides most of the ligands for the Mn4-Ca-O5 cluster of the oxygen-evolving complex (OEC). There is also a Cl(-1) ion associated with D1 and D2, which is required for oxygen evolution. The PSII complex binds additional chlorophylls, carotenoids and specific lipids. is required as a cofactor. Tyr-160 forms a radical intermediate that is referred to as redox-active TyrZ, YZ or Y-Z. In terms of processing, C-terminally processed by CtpA; processing is essential to allow assembly of the oxygen-evolving complex and thus photosynthetic growth.

The protein localises to the cellular thylakoid membrane. The enzyme catalyses 2 a plastoquinone + 4 hnu + 2 H2O = 2 a plastoquinol + O2. In terms of biological role, photosystem II (PSII) is a light-driven water:plastoquinone oxidoreductase that uses light energy to abstract electrons from H(2)O, generating O(2) and a proton gradient subsequently used for ATP formation. It consists of a core antenna complex that captures photons, and an electron transfer chain that converts photonic excitation into a charge separation. The D1/D2 (PsbA/PsbD) reaction center heterodimer binds P680, the primary electron donor of PSII as well as several subsequent electron acceptors. This is Photosystem II protein D1 from Prochlorococcus marinus (strain MIT 9303).